A 527-amino-acid chain; its full sequence is Catalase (527 aa).

Residues 1 to 22 (MSDSRDPASDQMKQWKEQRASQ) are compositionally biased toward basic and acidic residues. Residues 1–34 (MSDSRDPASDQMKQWKEQRASQRPDVLTTGGGNP) are disordered. N-acetylserine is present on Ser2. Ser9 is modified (phosphoserine). At Lys13 the chain carries N6-succinyllysine. Ser21 carries the phosphoserine modification. Residues His75 and Asn148 contribute to the active site. Residues His194, Ser201, Arg203, and Asn213 each contribute to the NADP(+) site. Lys221 carries the N6-succinyllysine modification. Lys233 carries the N6-acetyllysine modification. NADP(+) contacts are provided by Lys237, Trp303, His305, and Lys306. Lys306 bears the N6-acetyllysine; alternate mark. Lys306 is subject to N6-succinyllysine; alternate. Residue Tyr358 coordinates heme. Phosphoserine is present on residues Ser417 and Ser422. Residue Lys430 is modified to N6-acetyllysine; alternate. Lys430 is modified (N6-succinyllysine; alternate). Ser434 bears the Phosphoserine mark. An N6-acetyllysine; alternate mark is found at Lys449 and Lys480. Residues Lys449 and Lys480 each carry the N6-succinyllysine; alternate modification. Lys499 carries the post-translational modification N6-acetyllysine. Thr511 carries the post-translational modification Phosphothreonine. Ser517 carries the phosphoserine modification. Lys522 is modified (N6-succinyllysine). Positions 524 to 527 (KANL) match the Microbody targeting signal; atypical motif.

It belongs to the catalase family. Homotetramer. Interacts (via microbody targeting signal) with PEX5, monomeric form interacts with PEX5, leading to its translocation into peroxisomes. Heme serves as cofactor. Requires NADP(+) as cofactor.

Its subcellular location is the peroxisome matrix. It catalyses the reaction 2 H2O2 = O2 + 2 H2O. Its function is as follows. Catalyzes the degradation of hydrogen peroxide (H(2)O(2)) generated by peroxisomal oxidases to water and oxygen, thereby protecting cells from the toxic effects of hydrogen peroxide. Promotes growth of cells including T-cells, B-cells, myeloid leukemia cells, melanoma cells, mastocytoma cells and normal and transformed fibroblast cells. The chain is Catalase (Cat) from Mus musculus (Mouse).